Consider the following 222-residue polypeptide: Potassium-transporting ATPase KdpC subunit (222 aa).

The chain crosses the membrane as a helical span at residues 13–35 (WAGLRSLLVLTVVTGVLYPLAVT). Residues 136-162 (TADHKVKPSDVPADAVTSSGSGLDPDI) are disordered.

This sequence belongs to the KdpC family. In terms of assembly, the system is composed of three essential subunits: KdpA, KdpB and KdpC.

The protein resides in the cell membrane. In terms of biological role, part of the high-affinity ATP-driven potassium transport (or Kdp) system, which catalyzes the hydrolysis of ATP coupled with the electrogenic transport of potassium into the cytoplasm. This subunit acts as a catalytic chaperone that increases the ATP-binding affinity of the ATP-hydrolyzing subunit KdpB by the formation of a transient KdpB/KdpC/ATP ternary complex. The chain is Potassium-transporting ATPase KdpC subunit from Streptomyces avermitilis (strain ATCC 31267 / DSM 46492 / JCM 5070 / NBRC 14893 / NCIMB 12804 / NRRL 8165 / MA-4680).